A 279-amino-acid chain; its full sequence is MHFVKMHGLGNDFVLVNAMTEKVPGDLPGLARRVCHRRFGIGADGLILVLPSEQARLRMRIFNPDGSEPEMCGNGIRCFARYVYETGLAEGEELQVETLAGIIKPRLILEGGRVAGVRVDMGAPHLEREQIPMAGTGSPVLDEPIEVNGETWRGTCVSMGNPHCVFFVEDVTGAPVTTVGPVVEHHPLFPRRTNVEFIQVLNREELRMRVWERGAGETMACGTGACAAAVAGALTGRSNRKVTVHLAAGDLQIEWSPVDNHVYMTGPAVEVFRGDFPLD.

Positions 11 and 63 each coordinate substrate. The Proton donor role is filled by Cys72. Residues Gly73–Asn74, Asn161, Asn194, and Glu212–Arg213 contribute to the substrate site. Cys221 acts as the Proton acceptor in catalysis. Gly222–Thr223 contributes to the substrate binding site.

Belongs to the diaminopimelate epimerase family. As to quaternary structure, homodimer.

It localises to the cytoplasm. It catalyses the reaction (2S,6S)-2,6-diaminopimelate = meso-2,6-diaminopimelate. Its pathway is amino-acid biosynthesis; L-lysine biosynthesis via DAP pathway; DL-2,6-diaminopimelate from LL-2,6-diaminopimelate: step 1/1. Its function is as follows. Catalyzes the stereoinversion of LL-2,6-diaminopimelate (L,L-DAP) to meso-diaminopimelate (meso-DAP), a precursor of L-lysine and an essential component of the bacterial peptidoglycan. In Moorella thermoacetica (strain ATCC 39073 / JCM 9320), this protein is Diaminopimelate epimerase.